We begin with the raw amino-acid sequence, 639 residues long: Chaperone protein DnaK (639 aa).

Position 198 is a phosphothreonine; by autocatalysis (threonine 198). Residues 603–618 (AKAQTQGGAQEGAAKQ) show a composition bias toward low complexity. The disordered stretch occupies residues 603–639 (AKAQTQGGAQEGAAKQSNATADDVVDAEFEEVKDDKK). Residues 625–639 (DVVDAEFEEVKDDKK) show a composition bias toward acidic residues.

Belongs to the heat shock protein 70 family.

Acts as a chaperone. The polypeptide is Chaperone protein DnaK (Shewanella oneidensis (strain ATCC 700550 / JCM 31522 / CIP 106686 / LMG 19005 / NCIMB 14063 / MR-1)).